Consider the following 705-residue polypeptide: Elongation factor G (705 aa).

The tr-type G domain occupies 8–290 (AYYRNIGISA…AVIEYLPAPT (283 aa)). Residues 17–24 (AHIDAGKT), 88–92 (DTPGH), and 142–145 (NKMD) contribute to the GTP site.

The protein belongs to the TRAFAC class translation factor GTPase superfamily. Classic translation factor GTPase family. EF-G/EF-2 subfamily.

The protein resides in the cytoplasm. Functionally, catalyzes the GTP-dependent ribosomal translocation step during translation elongation. During this step, the ribosome changes from the pre-translocational (PRE) to the post-translocational (POST) state as the newly formed A-site-bound peptidyl-tRNA and P-site-bound deacylated tRNA move to the P and E sites, respectively. Catalyzes the coordinated movement of the two tRNA molecules, the mRNA and conformational changes in the ribosome. The sequence is that of Elongation factor G from Baumannia cicadellinicola subsp. Homalodisca coagulata.